We begin with the raw amino-acid sequence, 1710 residues long: Centrosomal protein of 152 kDa (1710 aa).

Disordered stretches follow at residues 1–27 (MSLDFGSVALPVQNEDEEYDEEDYERE), 39–79 (HDML…NEQM), and 108–139 (NRSKTEDRHPVYHPEEGGDEGGSGYSPPSKCE). The interaction with PLK4 stretch occupies residues 1–60 (MSLDFGSVALPVQNEDEEYDEEDYEREKELQQLLTDLPHDMLDDDLSSPELQYSDCSEDG). Acidic residues predominate over residues 14-24 (NEDEEYDEEDY). Over residues 108–123 (NRSKTEDRHPVYHPEE) the composition is skewed to basic and acidic residues. The stretch at 234–490 (ENMQIIQLQV…ISLYESAAKL (257 aa)) forms a coiled coil. Residues 587-604 (DEKSIEVETKTDTSEKPK) show a composition bias toward basic and acidic residues. A disordered region spans residues 587-611 (DEKSIEVETKTDTSEKPKNQLWPES). 3 coiled-coil regions span residues 615–664 (DVVR…QDFD), 700–772 (EKQQ…LEKE), and 902–993 (AVSE…INEV). The disordered stretch occupies residues 1120-1142 (ELSKDSASQGTGQGDPGPAAGHH). The stretch at 1170–1241 (HCFQELEKAK…LEELQTLCKT (72 aa)) forms a coiled coil. Phosphothreonine is present on Thr-1241.

It belongs to the CEP152 family. Interacts (via N-terminus) with PLK4; the interaction is mutally exclusive with a PLK4:CEP192 interaction. Interacts (via C-terminus) with CPAP (via-N-terminus). Interacts with CINP. Interacts with CDK5RAP2, WDR62, CEP63 and CEP131. CEP63, CDK5RAP2, CEP152, WDR62 are proposed to form a stepwise assembled complex at the centrosome forming a ring near parental centrioles. Interacts with DEUP1; this interaction recruits CEP152 to the deuterosome. The interactions with CEP63 and DEUP1 are mutually exclusive. Interacts with CCDC66.

It is found in the cytoplasm. It localises to the cytoskeleton. The protein resides in the microtubule organizing center. Its subcellular location is the centrosome. The protein localises to the centriole. Necessary for centrosome duplication; the function also seems to involve CEP63, CDK5RAP2 and WDR62 through a stepwise assembled complex at the centrosome that recruits CDK2 required for centriole duplication. Acts as a molecular scaffold facilitating the interaction of PLK4 and CPAP, 2 molecules involved in centriole formation. Proposed to snatch PLK4 away from PLK4:CEP92 complexes in early G1 daughter centriole and to reposition PLK4 at the outer boundary of a newly forming CEP152 ring structure. Also plays a key role in deuterosome-mediated centriole amplification in multiciliated that can generate more than 100 centrioles. Overexpression of CEP152 can drive amplification of centrioles. The sequence is that of Centrosomal protein of 152 kDa from Homo sapiens (Human).